Consider the following 636-residue polypeptide: Chaperone protein DnaK (636 aa).

T196 carries the post-translational modification Phosphothreonine; by autocatalysis. Residues 591–636 (LAEAMYKSSSQPGAQEAPPTDGQPKPDEKGKDNVVDAEFVDVDDKK) form a disordered region. Residues 614–624 (PKPDEKGKDNV) are compositionally biased toward basic and acidic residues.

It belongs to the heat shock protein 70 family.

Acts as a chaperone. In Solibacter usitatus (strain Ellin6076), this protein is Chaperone protein DnaK.